Here is a 160-residue protein sequence, read N- to C-terminus: DNA topoisomerase small subunit (160 aa).

Part of the DNA topoisomerase complex made of gp39, gp52 and gp60. The cofactor is Mg(2+).

It catalyses the reaction ATP-dependent breakage, passage and rejoining of double-stranded DNA.. Small subunit of the DNA topoisomerase that untwists superhelical DNA. Controls topological states of double-stranded DNA by transient breakage and subsequent rejoining of DNA strands. The protein is DNA topoisomerase small subunit (60) of Enterobacteria phage T4 (Bacteriophage T4).